Reading from the N-terminus, the 88-residue chain is Small ribosomal subunit protein uS15 (88 aa).

The protein belongs to the universal ribosomal protein uS15 family. In terms of assembly, part of the 30S ribosomal subunit. Forms a bridge to the 50S subunit in the 70S ribosome, contacting the 23S rRNA.

One of the primary rRNA binding proteins, it binds directly to 16S rRNA where it helps nucleate assembly of the platform of the 30S subunit by binding and bridging several RNA helices of the 16S rRNA. Its function is as follows. Forms an intersubunit bridge (bridge B4) with the 23S rRNA of the 50S subunit in the ribosome. The sequence is that of Small ribosomal subunit protein uS15 from Leptospira biflexa serovar Patoc (strain Patoc 1 / Ames).